A 594-amino-acid chain; its full sequence is Lipolysis-stimulated lipoprotein receptor (594 aa).

Residues 1–35 (MAPAASACAGAPGSHPATTIFVCLFLIIYCPDRAS) form the signal peptide. Topologically, residues 36-206 (AIQVTVPDPY…PGFRAGPLED (171 aa)) are extracellular. The Ig-like V-type domain occupies 89 to 181 (PASVDNQLNA…DLDGNNEAYA (93 aa)). Cysteines 113 and 165 form a disulfide. A helical transmembrane segment spans residues 207–227 (WLFVVVVCLASLLFFLLLGIC). Residues 228–594 (WCQCCPHTCC…LALSRESLVV (367 aa)) are Cytoplasmic-facing. Threonine 283 is subject to Phosphothreonine. Serine 308 carries the post-translational modification Phosphoserine; by MAPK8 and MAPK9. A phosphoserine mark is found at serine 314, serine 332, serine 375, and serine 379. A compositionally biased stretch (basic and acidic residues) spans 375 to 387 (SEVTSLHEDDWRS). Positions 375–594 (SEVTSLHEDD…LALSRESLVV (220 aa)) are disordered. Threonine 396 is modified (phosphothreonine). Residues serine 407, serine 410, and serine 436 each carry the phosphoserine modification. The span at 435-444 (RSVDALDDIN) shows a compositional bias: basic and acidic residues. Over residues 445–460 (RPGSTESGRSSPPSSG) the composition is skewed to low complexity. 2 positions are modified to phosphoserine: serine 471 and serine 473. The segment covering 472 to 550 (RSRDDLYDPD…GAGERRRVYR (79 aa)) has biased composition (basic and acidic residues). Position 478 is a phosphotyrosine (tyrosine 478). Position 576 is a phosphoserine (serine 576). Lysine 583 participates in a covalent cross-link: Glycyl lysine isopeptide (Lys-Gly) (interchain with G-Cter in ubiquitin). A phosphoserine mark is found at serine 588 and serine 591.

This sequence belongs to the immunoglobulin superfamily. LISCH7 family. In terms of assembly, homotrimer or homotetramer. Assembles into cell-cell contacts. Interacts (via the cytoplasmic domain) with MARVELD2 (via C-terminal cytoplasmic domain); the interaction is required to recruit MARVELD2 to tricellular contacts. Interacts with OCLN. In terms of processing, phosphorylation at Ser-308 by MAPK8/JNK1 and MAPK9/JNK2 may be required for exclusive localization at tricellular tight junstions. Polyubiquitinated at Lys-583 via 'Lys-63'-linked ubiquitin chains; deubiquitinated by USP53. Expressed in epithelial tissues (at protein level). Specifically expressed in liver and to a lower extent in kidney (at protein level). Also detected in brain, testis, ovaries, adrenal gland, intestine, muscle, and lung. In colon, only expressed in the lower portion of crypts. Expressed in the liver. In terms of tissue distribution, expressed in liver, stomach, small intestine and colon. Also detected in other epithelial tissues.

The protein localises to the cell membrane. It is found in the cell junction. Its subcellular location is the tight junction. Functionally, probable role in the clearance of triglyceride-rich lipoprotein from blood. Binds chylomicrons, LDL and VLDL in presence of free fatty acids and allows their subsequent uptake in the cells. Maintains epithelial barrier function by recruiting MARVELD2/tricellulin to tricellular tight junctions. The sequence is that of Lipolysis-stimulated lipoprotein receptor from Mus musculus (Mouse).